A 122-amino-acid polypeptide reads, in one-letter code: Large ribosomal subunit protein uL14 (122 aa).

The protein belongs to the universal ribosomal protein uL14 family. As to quaternary structure, part of the 50S ribosomal subunit. Forms a cluster with proteins L3 and L19. In the 70S ribosome, L14 and L19 interact and together make contacts with the 16S rRNA in bridges B5 and B8.

In terms of biological role, binds to 23S rRNA. Forms part of two intersubunit bridges in the 70S ribosome. This is Large ribosomal subunit protein uL14 from Kineococcus radiotolerans (strain ATCC BAA-149 / DSM 14245 / SRS30216).